Reading from the N-terminus, the 331-residue chain is Phosphate acyltransferase (331 aa).

This sequence belongs to the PlsX family. As to quaternary structure, homodimer. Probably interacts with PlsY.

The protein resides in the cytoplasm. It carries out the reaction a fatty acyl-[ACP] + phosphate = an acyl phosphate + holo-[ACP]. The protein operates within lipid metabolism; phospholipid metabolism. Catalyzes the reversible formation of acyl-phosphate (acyl-PO(4)) from acyl-[acyl-carrier-protein] (acyl-ACP). This enzyme utilizes acyl-ACP as fatty acyl donor, but not acyl-CoA. This Malacoplasma penetrans (strain HF-2) (Mycoplasma penetrans) protein is Phosphate acyltransferase.